Consider the following 293-residue polypeptide: ELMO domain-containing protein 2 (293 aa).

Residues 126 to 282 (QHEELLMKLW…KFHEKIKGLL (157 aa)) form the ELMO domain.

Alveolar cells (morphologically type II cells) and alveolar macrophages (at protein level). Expressed in brain, colon, heart, kidney, liver, lung, muscle, placenta, small intestine, spleen, stomach and testis. In lung it is expressed in alveolar macrophages and alveolar walls.

Acts as a GTPase-activating protein (GAP) toward guanine nucleotide exchange factors like ARL2, ARL3, ARF1 and ARF6, but not for GTPases outside the Arf family. Regulates IFN-related antiviral responses. In Homo sapiens (Human), this protein is ELMO domain-containing protein 2 (ELMOD2).